Here is a 455-residue protein sequence, read N- to C-terminus: Bifunctional protein GlmU (455 aa).

Residues 1–225 form a pyrophosphorylase region; the sequence is MNIVILAAGL…EWETLGVNSK (225 aa). Residues 6-9, Lys20, Gln71, 76-77, 98-100, Gly135, Glu150, Asn165, and Asn223 each bind UDP-N-acetyl-alpha-D-glucosamine; these read LAAG, GT, and YGD. Asp100 lines the Mg(2+) pocket. Mg(2+) is bound at residue Asn223. A linker region spans residues 226 to 246; sequence VQLAELERIHQRNLAQQLLED. The segment at 247–455 is N-acetyltransferase; the sequence is GVTLIDPARI…QRPVKQKKDA (209 aa). Residues Arg329 and Lys347 each coordinate UDP-N-acetyl-alpha-D-glucosamine. His359 (proton acceptor) is an active-site residue. Residues Tyr362 and Asn373 each contribute to the UDP-N-acetyl-alpha-D-glucosamine site. Acetyl-CoA contacts are provided by residues Ala376, 382 to 383, Ser401, Ala419, and Arg436; that span reads NY.

The protein in the N-terminal section; belongs to the N-acetylglucosamine-1-phosphate uridyltransferase family. It in the C-terminal section; belongs to the transferase hexapeptide repeat family. As to quaternary structure, homotrimer. Mg(2+) is required as a cofactor.

It localises to the cytoplasm. The catalysed reaction is alpha-D-glucosamine 1-phosphate + acetyl-CoA = N-acetyl-alpha-D-glucosamine 1-phosphate + CoA + H(+). It catalyses the reaction N-acetyl-alpha-D-glucosamine 1-phosphate + UTP + H(+) = UDP-N-acetyl-alpha-D-glucosamine + diphosphate. The protein operates within nucleotide-sugar biosynthesis; UDP-N-acetyl-alpha-D-glucosamine biosynthesis; N-acetyl-alpha-D-glucosamine 1-phosphate from alpha-D-glucosamine 6-phosphate (route II): step 2/2. It participates in nucleotide-sugar biosynthesis; UDP-N-acetyl-alpha-D-glucosamine biosynthesis; UDP-N-acetyl-alpha-D-glucosamine from N-acetyl-alpha-D-glucosamine 1-phosphate: step 1/1. Its pathway is bacterial outer membrane biogenesis; LPS lipid A biosynthesis. Catalyzes the last two sequential reactions in the de novo biosynthetic pathway for UDP-N-acetylglucosamine (UDP-GlcNAc). The C-terminal domain catalyzes the transfer of acetyl group from acetyl coenzyme A to glucosamine-1-phosphate (GlcN-1-P) to produce N-acetylglucosamine-1-phosphate (GlcNAc-1-P), which is converted into UDP-GlcNAc by the transfer of uridine 5-monophosphate (from uridine 5-triphosphate), a reaction catalyzed by the N-terminal domain. This chain is Bifunctional protein GlmU, found in Ralstonia nicotianae (strain ATCC BAA-1114 / GMI1000) (Ralstonia solanacearum).